The sequence spans 400 residues: Transcription initiation factor IIF subunit beta (400 aa).

The segment covering 1–19 has biased composition (polar residues); sequence MSSGSAGAPALSNNSTNSV. A disordered region spans residues 1 to 47; it reads MSSGSAGAPALSNNSTNSVAKEKSGNISGDEYLSQEEEVFDGNDIEN. S28, S34, and S56 each carry phosphoserine. Positions 33 to 47 are enriched in acidic residues; the sequence is LSQEEEVFDGNDIEN. 2 disordered regions span residues 165 to 194 and 366 to 400; these read QEREEELKKKQQQQKRRNNRKKFNHRVMTD and TLGELADEQTGSAGDNAQGDAEADLEDEIEMEDVV. A compositionally biased stretch (basic residues) spans 174–189; sequence KQQQQKRRNNRKKFNH. Over residues 386–400 the composition is skewed to acidic residues; it reads AEADLEDEIEMEDVV.

The protein belongs to the TFIIF beta subunit family. In terms of assembly, TFIIF is composed of three different subunits: TFG1/RAP74, TFG2/RAP30 and TAF14.

It is found in the nucleus. In terms of biological role, TFIIF is a general transcription initiation factor that binds to RNA polymerase II. Its functions include the recruitment of RNA polymerase II to the promoter bound DNA-TBP-TFIIB complex, decreasing the affinity of RNA polymerase II for non-specific DNA, allowing for the subsequent recruitment of TFIIE and TFIIH, and facilitating RNA polymerase II elongation. The sequence is that of Transcription initiation factor IIF subunit beta (TFG2) from Saccharomyces cerevisiae (strain ATCC 204508 / S288c) (Baker's yeast).